The primary structure comprises 636 residues: DNA mismatch repair protein MutL (636 aa).

Residues 332–344 (HAGEQGDSLRTDI) show a composition bias toward basic and acidic residues. 2 disordered regions span residues 332 to 360 (HAGE…PADN) and 417 to 443 (ASAP…SDDA). Low complexity predominate over residues 417–437 (ASAPADAAPAQASEPAAAPQA).

Belongs to the DNA mismatch repair MutL/HexB family.

Its function is as follows. This protein is involved in the repair of mismatches in DNA. It is required for dam-dependent methyl-directed DNA mismatch repair. May act as a 'molecular matchmaker', a protein that promotes the formation of a stable complex between two or more DNA-binding proteins in an ATP-dependent manner without itself being part of a final effector complex. This chain is DNA mismatch repair protein MutL, found in Ralstonia nicotianae (strain ATCC BAA-1114 / GMI1000) (Ralstonia solanacearum).